We begin with the raw amino-acid sequence, 538 residues long: CTP synthase (538 aa).

The tract at residues 1-269 (MSPRKYVIVT…ARLVERRLFG (269 aa)) is amidoligase domain. Residue Ser15 coordinates CTP. Ser15 is a UTP binding site. Residue 16–21 (SVGKGL) participates in ATP binding. Tyr56 is a binding site for L-glutamine. Asp73 provides a ligand contact to ATP. The Mg(2+) site is built by Asp73 and Glu143. CTP contacts are provided by residues 150–152 (DIE), 190–195 (KTKPVQ), and Lys226. Residues 190–195 (KTKPVQ) and Lys226 contribute to the UTP site. Positions 294 to 538 (KVAMVGKYTK…FVTAVARLRG (245 aa)) constitute a Glutamine amidotransferase type-1 domain. Gly358 is an L-glutamine binding site. Cys385 acts as the Nucleophile; for glutamine hydrolysis in catalysis. Residues 386-389 (FGMQ), Glu409, and Arg466 contribute to the L-glutamine site. Active-site residues include His512 and Glu514.

Belongs to the CTP synthase family. Homotetramer.

The enzyme catalyses UTP + L-glutamine + ATP + H2O = CTP + L-glutamate + ADP + phosphate + 2 H(+). The catalysed reaction is L-glutamine + H2O = L-glutamate + NH4(+). It catalyses the reaction UTP + NH4(+) + ATP = CTP + ADP + phosphate + 2 H(+). The protein operates within pyrimidine metabolism; CTP biosynthesis via de novo pathway; CTP from UDP: step 2/2. Allosterically activated by GTP, when glutamine is the substrate; GTP has no effect on the reaction when ammonia is the substrate. The allosteric effector GTP functions by stabilizing the protein conformation that binds the tetrahedral intermediate(s) formed during glutamine hydrolysis. Inhibited by the product CTP, via allosteric rather than competitive inhibition. Catalyzes the ATP-dependent amination of UTP to CTP with either L-glutamine or ammonia as the source of nitrogen. Regulates intracellular CTP levels through interactions with the four ribonucleotide triphosphates. The protein is CTP synthase of Aeropyrum pernix (strain ATCC 700893 / DSM 11879 / JCM 9820 / NBRC 100138 / K1).